Here is a 188-residue protein sequence, read N- to C-terminus: Ion-translocating oxidoreductase complex subunit B (188 aa).

The tract at residues 1–23 (MIEAAVSMSALGLGLGLLLGVAA) is hydrophobic. One can recognise a 4Fe-4S domain in the interval 29-88 (ESPPILDAIEGILPGTNCGACGYPGCRGLAEAMSEGAAPVTACAPGGRDVALALAAIVET). [4Fe-4S] cluster-binding residues include Cys46, Cys49, Cys54, Cys71, Cys113, Cys116, Cys119, Cys123, Cys143, Cys146, Cys149, and Cys153. 4Fe-4S ferredoxin-type domains follow at residues 104-133 (TVAF…GANR) and 134-163 (QIHT…ARVK).

The protein belongs to the 4Fe4S bacterial-type ferredoxin family. RnfB subfamily. In terms of assembly, the complex is composed of six subunits: RnfA, RnfB, RnfC, RnfD, RnfE and RnfG. [4Fe-4S] cluster serves as cofactor.

It localises to the cellular chromatophore membrane. Its function is as follows. Part of a membrane-bound complex that couples electron transfer with translocation of ions across the membrane. The sequence is that of Ion-translocating oxidoreductase complex subunit B from Cereibacter sphaeroides (strain ATCC 17029 / ATH 2.4.9) (Rhodobacter sphaeroides).